Consider the following 296-residue polypeptide: Ribosomal RNA small subunit methyltransferase H (296 aa).

S-adenosyl-L-methionine-binding positions include 38–40, glutamate 57, phenylalanine 88, aspartate 103, and histidine 110; that span reads GVH.

It belongs to the methyltransferase superfamily. RsmH family.

Its subcellular location is the cytoplasm. It catalyses the reaction cytidine(1402) in 16S rRNA + S-adenosyl-L-methionine = N(4)-methylcytidine(1402) in 16S rRNA + S-adenosyl-L-homocysteine + H(+). In terms of biological role, specifically methylates the N4 position of cytidine in position 1402 (C1402) of 16S rRNA. This is Ribosomal RNA small subunit methyltransferase H from Borreliella burgdorferi (strain ZS7) (Borrelia burgdorferi).